Consider the following 704-residue polypeptide: Transcription factor HNF-4 homolog (704 aa).

Positions 93–133 are disordered; that stretch reads SAGGGSASSGSNNNNSMFSPNNNLSGSGSGTNSSQQQLQQQ. Over residues 100–133 the composition is skewed to low complexity; it reads SSGSNNNNSMFSPNNNLSGSGSGTNSSQQQLQQQ. Residues 139–214 constitute a DNA-binding region (nuclear receptor); it reads PTVCAICGDR…AGMKKEAVQN (76 aa). NR C4-type zinc fingers lie at residues 142 to 162 and 178 to 197; these read CAIC…CDGC and CRFA…CRYC. An NR LBD domain is found at 232–470; that stretch reads GNGLSVISLV…SLLQEMLLGG (239 aa). Disordered stretches follow at residues 474 to 520, 563 to 624, and 684 to 704; these read DNPL…GSHS, PASV…QRMH, and PAGY…ETGY. Polar residues predominate over residues 487-512; the sequence is DYQSPTHTGNMEGGNQVNSSLDSLAT. Over residues 563–574 the composition is skewed to low complexity; the sequence is PASVAPASISPP. The segment covering 608–620 has biased composition (polar residues); it reads GSRSGPLPTQHSP.

This sequence belongs to the nuclear hormone receptor family. NR2 subfamily. In terms of assembly, homodimer. In terms of tissue distribution, in third instar larvae, expressed at high levels in midgut and attached gastric caeca, fat body, Malpighian tubules and oenocytes, and at lower levels in proventriculus, salivary glands, epidermis, brain and ring gland. Not detected in imaginal disks and the median neurosecretory cells that produce insulin-like peptides (at protein level). In developing embryos, expressed in mid-gut, fat bodies and the distal region of Malpighian tubules.

It localises to the nucleus. Transcriptionally controlled transcription factor. Important for the differentiation of various specialized cell types that arise from both endoderm and mesoderm. May have a role in early gut formation. Plays an essential role in lipid catabolism, regulating lipid mobilization and beta-oxidation in response to nutrient deprivation. This Drosophila melanogaster (Fruit fly) protein is Transcription factor HNF-4 homolog (Hnf4).